Reading from the N-terminus, the 117-residue chain is Ribosome-binding factor A (117 aa).

Belongs to the RbfA family. Monomer. Binds 30S ribosomal subunits, but not 50S ribosomal subunits or 70S ribosomes.

It is found in the cytoplasm. One of several proteins that assist in the late maturation steps of the functional core of the 30S ribosomal subunit. Associates with free 30S ribosomal subunits (but not with 30S subunits that are part of 70S ribosomes or polysomes). Required for efficient processing of 16S rRNA. May interact with the 5'-terminal helix region of 16S rRNA. The sequence is that of Ribosome-binding factor A from Streptococcus suis (strain 98HAH33).